The chain runs to 471 residues: Ribulose bisphosphate carboxylase large chain (471 aa).

The residue at position 5 (Lys5) is an N6,N6,N6-trimethyllysine. Substrate is bound by residues Asn114 and Thr164. Catalysis depends on Lys166, which acts as the Proton acceptor. Lys168 is a binding site for substrate. Positions 192, 194, and 195 each coordinate Mg(2+). An N6-carboxylysine modification is found at Lys192. His285 functions as the Proton acceptor in the catalytic mechanism. Substrate contacts are provided by Arg286, His318, and Ser370.

This sequence belongs to the RuBisCO large chain family. Type I subfamily. As to quaternary structure, heterohexadecamer of 8 large chains and 8 small chains; disulfide-linked. The disulfide link is formed within the large subunit homodimers. Mg(2+) serves as cofactor. The disulfide bond which can form in the large chain dimeric partners within the hexadecamer appears to be associated with oxidative stress and protein turnover.

Its subcellular location is the plastid. It is found in the chloroplast. The enzyme catalyses 2 (2R)-3-phosphoglycerate + 2 H(+) = D-ribulose 1,5-bisphosphate + CO2 + H2O. The catalysed reaction is D-ribulose 1,5-bisphosphate + O2 = 2-phosphoglycolate + (2R)-3-phosphoglycerate + 2 H(+). In terms of biological role, ruBisCO catalyzes two reactions: the carboxylation of D-ribulose 1,5-bisphosphate, the primary event in carbon dioxide fixation, as well as the oxidative fragmentation of the pentose substrate in the photorespiration process. Both reactions occur simultaneously and in competition at the same active site. This chain is Ribulose bisphosphate carboxylase large chain, found in Chiococca alba (West Indian milkberry).